Here is a 579-residue protein sequence, read N- to C-terminus: Laccase-4 (579 aa).

The N-terminal stretch at 1–28 (MTMAISSALPSPLLLAASLLLLIVQAQG) is a signal peptide. Plastocyanin-like domains are found at residues 36–152 (NVQM…PKLG) and 162–316 (KEVP…YENP). Residues Asn41 and Asn82 are each glycosylated (N-linked (GlcNAc...) asparagine). Cu cation is bound by residues His86 and His88. N-linked (GlcNAc...) asparagine glycosylation occurs at Asn118. Residues His131 and His133 each contribute to the Cu cation site. Residues Asn191, Asn207, Asn243, Asn304, Asn340, Asn347, Asn386, Asn393, Asn403, Asn439, Asn446, and Asn462 are each glycosylated (N-linked (GlcNAc...) asparagine). One can recognise a Plastocyanin-like 3 domain in the interval 429–563 (DFPVAPLSPF…RMAWLVLDGS (135 aa)). Cu cation-binding residues include His480, His483, His485, His542, Cys543, His544, and His548.

This sequence belongs to the multicopper oxidase family. Cu cation serves as cofactor.

It is found in the secreted. The protein resides in the extracellular space. The protein localises to the apoplast. It carries out the reaction 4 hydroquinone + O2 = 4 benzosemiquinone + 2 H2O. Its function is as follows. Lignin degradation and detoxification of lignin-derived products. The chain is Laccase-4 (LAC4) from Oryza sativa subsp. japonica (Rice).